The chain runs to 510 residues: Light-independent protochlorophyllide reductase subunit B (510 aa).

Asp-36 is a binding site for [4Fe-4S] cluster. The active-site Proton donor is the Asp-297. Substrate is bound at residue 432–433 (GM).

This sequence belongs to the ChlB/BchB/BchZ family. As to quaternary structure, protochlorophyllide reductase is composed of three subunits; ChlL, ChlN and ChlB. Forms a heterotetramer of two ChlB and two ChlN subunits. [4Fe-4S] cluster is required as a cofactor.

It is found in the plastid. The protein resides in the chloroplast. It carries out the reaction chlorophyllide a + oxidized 2[4Fe-4S]-[ferredoxin] + 2 ADP + 2 phosphate = protochlorophyllide a + reduced 2[4Fe-4S]-[ferredoxin] + 2 ATP + 2 H2O. It functions in the pathway porphyrin-containing compound metabolism; chlorophyll biosynthesis (light-independent). Component of the dark-operative protochlorophyllide reductase (DPOR) that uses Mg-ATP and reduced ferredoxin to reduce ring D of protochlorophyllide (Pchlide) to form chlorophyllide a (Chlide). This reaction is light-independent. The NB-protein (ChlN-ChlB) is the catalytic component of the complex. The sequence is that of Light-independent protochlorophyllide reductase subunit B from Pinus thunbergii (Japanese black pine).